A 151-amino-acid chain; its full sequence is Putative pre-16S rRNA nuclease (151 aa).

This sequence belongs to the YqgF nuclease family.

The protein resides in the cytoplasm. Could be a nuclease involved in processing of the 5'-end of pre-16S rRNA. This Methylococcus capsulatus (strain ATCC 33009 / NCIMB 11132 / Bath) protein is Putative pre-16S rRNA nuclease.